We begin with the raw amino-acid sequence, 275 residues long: Glycerol-3-phosphate dehydrogenase [NAD(P)+] (275 aa).

NADPH-binding residues include W12, R32, and K105. Positions 105, 133, and 135 each coordinate sn-glycerol 3-phosphate. NADPH is bound at residue A137. Residues K188, D241, S251, R252, and N253 each contribute to the sn-glycerol 3-phosphate site. The active-site Proton acceptor is the K188. An NADPH-binding site is contributed by R252.

It belongs to the NAD-dependent glycerol-3-phosphate dehydrogenase family.

It localises to the cytoplasm. The enzyme catalyses sn-glycerol 3-phosphate + NAD(+) = dihydroxyacetone phosphate + NADH + H(+). It catalyses the reaction sn-glycerol 3-phosphate + NADP(+) = dihydroxyacetone phosphate + NADPH + H(+). It functions in the pathway membrane lipid metabolism; glycerophospholipid metabolism. Its function is as follows. Catalyzes the reduction of the glycolytic intermediate dihydroxyacetone phosphate (DHAP) to sn-glycerol 3-phosphate (G3P), the key precursor for phospholipid synthesis. The sequence is that of Glycerol-3-phosphate dehydrogenase [NAD(P)+] from Paramagnetospirillum magneticum (strain ATCC 700264 / AMB-1) (Magnetospirillum magneticum).